The chain runs to 388 residues: P2X receptor E (388 aa).

At Met-1–Gly-28 the chain is on the cytoplasmic side. The chain crosses the membrane as a helical span at residues Ile-29–Leu-49. Topologically, residues Gln-50–Met-312 are lumenal. Residues Arg-291–Leu-304 form a pore-forming motif region. The chain crosses the membrane as a helical span at residues Leu-313–Ile-333. At Ala-334 to Lys-388 the chain is on the cytoplasmic side. The tract at residues Phe-349–Lys-388 is disordered. Polar residues-rich tracts occupy residues Gln-350 to His-365 and Asn-377 to Lys-388.

It belongs to the P2X receptor family.

It localises to the contractile vacuole membrane. Its function is as follows. P2X receptors are ATP-gated ion channels that play a role in intracellular calcium signaling. Not required for the purinergic response to extracellular nucleotides. Not essential for osmoregulation. Inward currents evoked by intracellular ATP. ATP analog beta, gamma-imido-ATP is a weak partial agonist of p2xE. Exclusively selective for ATP over other nucleotides. Insensitive to copper and P2 receptor antagonists PPADS and suramin but strongly inhibited by sodium ions. More permeable to ammonium than either sodium or potassium ions and less permeable to choline. Permeable to calcium ions, but not chloride. The chain is P2X receptor E (p2xE) from Dictyostelium discoideum (Social amoeba).